The primary structure comprises 500 residues: Ephrin type-B receptor 3 (500 aa).

The Fibronectin type-III domain occupies 1–64 (PLLVLDLIIQ…NPVDFSTSLY (64 aa)). At 1–113 (PLLVLDLIIQ…ERSVQDLLPL (113 aa)) the chain is on the extracellular side. The tract at residues 76–103 (HLRRREELTTTTTGLKSREERFQKSDDP) is disordered. Basic and acidic residues predominate over residues 91–103 (KSREERFQKSDDP). The helical transmembrane segment at 114–134 (IVGSASAGFVVILAMIVIAVV) threads the bilayer. At 135–500 (CLRRQRTGSE…QMSQTLPIRV (366 aa)) the chain is on the cytoplasmic side. Tyr168 carries the post-translational modification Phosphotyrosine; by autocatalysis. One can recognise a Protein kinase domain in the interval 187-450 (VKIEEVIGAG…QIVSTLDKFL (264 aa)). ATP contacts are provided by residues 193–201 (IGAGEFGEV) and Lys219. Catalysis depends on Asp312, which acts as the Proton acceptor. The 80-residue stretch at 421–500 (LHQLMLECWV…QMSQTLPIRV (80 aa)) folds into the SAM domain. Positions 498–500 (IRV) match the PDZ-binding motif.

This sequence belongs to the protein kinase superfamily. Tyr protein kinase family. Ephrin receptor subfamily. As to quaternary structure, heterotetramer upon binding of the ligand. The heterotetramer is composed of an ephrin dimer and a receptor dimer. Oligomerization is probably required to induce biological responses. Post-translationally, phosphorylated. Autophosphorylates upon ligand-binding. Autophosphorylation on Tyr-168 is required for interaction with SH2 domain-containing proteins. Widely expressed in the developing nervous system.

The protein localises to the cell membrane. It is found in the cell projection. It localises to the dendrite. It carries out the reaction L-tyrosyl-[protein] + ATP = O-phospho-L-tyrosyl-[protein] + ADP + H(+). Its function is as follows. Receptor tyrosine kinase which binds promiscuously transmembrane ephrin-B family ligands residing on adjacent cells, leading to contact-dependent bidirectional signaling into neighboring cells. The signaling pathway downstream of the receptor is referred to as forward signaling while the signaling pathway downstream of the ephrin ligand is referred to as reverse signaling. Generally has an overlapping and redundant function with EPHB2. Like EPHB2, functions in axon guidance during development. In addition to its role in axon guidance also plays an important redundant role with other ephrin-B receptors in development and maturation of dendritic spines and the formation of excitatory synapses. May control other aspects of development through regulation of cell migration and positioning. May play a role in early pattern formation within the developing nervous system. The polypeptide is Ephrin type-B receptor 3 (ephb3) (Danio rerio (Zebrafish)).